Reading from the N-terminus, the 278-residue chain is Inner membrane mitoribosome receptor MBA1, mitochondrial (278 aa).

The N-terminal 33 residues, M1–L33, are a transit peptide targeting the mitochondrion.

Interacts with OXA1 and MDM38. Binds to mitoribosomes in order to recruit them to the mitochondrial inner membrane.

Its subcellular location is the mitochondrion inner membrane. Mitochondrial inner membrane-associated mitoribosome receptor that spatially aligns the mitoribosome exit tunnel with the membrane insertion machinery and allows cotranslational protein membrane insertion. The sequence is that of Inner membrane mitoribosome receptor MBA1, mitochondrial from Saccharomyces cerevisiae (strain ATCC 204508 / S288c) (Baker's yeast).